The sequence spans 308 residues: Testis-specific Y-encoded protein 1 (308 aa).

It belongs to the nucleosome assembly protein (NAP) family. Phosphorylated. Specifically expressed in testicular tissues. Isoform 1 and isoform 2 are expressed in spermatogonia and spermatocytes. Found in early testicular carcinoma in situ, spermatogonial cells in testicular tissues of 46,X,Y female and in prostate cancer cell lines.

It localises to the cytoplasm. The protein resides in the nucleus. Functionally, may be involved in sperm differentiation and proliferation. The polypeptide is Testis-specific Y-encoded protein 1 (TSPY1) (Homo sapiens (Human)).